The chain runs to 167 residues: Endoribonuclease YbeY (167 aa).

Zn(2+)-binding residues include histidine 131, histidine 135, and histidine 141.

It belongs to the endoribonuclease YbeY family. Zn(2+) is required as a cofactor.

It is found in the cytoplasm. Its function is as follows. Single strand-specific metallo-endoribonuclease involved in late-stage 70S ribosome quality control and in maturation of the 3' terminus of the 16S rRNA. This chain is Endoribonuclease YbeY, found in Rickettsia rickettsii (strain Iowa).